A 965-amino-acid polypeptide reads, in one-letter code: MTSKTIVNSLAELEQTQDFIRRHIGPSESETQAMLNDLGVESVDALIDEIVPSDIRLADLPNVEESKTEVQALADLKAVASLNKVNDTYIGLGYFGTLTPNVILRNVLENPGWYTAYTPYQPEIAQGRLESLLNYQQMCIDLTGLELASASLLDEGTAAAEAMALAKRVSKNKKSNLFFISDDVYPQTIDVVKQRAEMFGFDIVVAPAADAAEHDIFGALIQYPGASGQVTDVSELIAKIHDNKGIVAVAADIMSLVLLKSPGELGADAVIGSSQRFGVPMGYGGPHAAFFTTLDKYKRSLPGRIIGVSKDTRGKNALRMAMQTREQHIRREKANSNVCTAQVLLANMAAFYAVYHGPQGLKTIANRIHRLADILCLGTATKGLTAVHANYFDTLTFNVDNKDEIVARALAANANFRTDVDGQISIALDETTTRENVAQLFDILLGEGHGLNVSDLDDQIVASGHSSIPASLVRESAILTHPVFNSYHSETEMLRYIKRLENKDLALNHSMISLGSCTMKLNATAQMIPVSWPEFANMHPFAPVNQAQGYKAMIDELAKWLVELTGYDKMSMQPNSGAQGEYAGLIAISKYHESRGDSHRNICLIPASAHGTNPASAMMVDMKIVIVACDKEGNVDMADLKAKAEELADNLACIMITYPSTHGVYETTIAEICNIIHDNGGQVYLDGANMNAQVGLTSPGFIGADVSHLNLHKTFAIPHGGGGPGMGPIGVKSHLAPFLPDHALINVDEATKGNGAVSSAPFGSASILPITYLYIALLGKKGVTDATKYAITNANYVSKKLSEHYPILYSGKNGRVAHECIVDLRPLKASSGVTEVDMAKRLMDYGFHSPTMSFPVAGTFMIEPTESESKVELDRFIEAMVCIRDEVRKVESGEWASDNNPLHNAPHTLADITEPWDRPYSIQEAVFPVVAVTANKFWPTVNRIDDVFGDRNLICSCPPIESYID.

Residue Lys-713 is modified to N6-(pyridoxal phosphate)lysine.

Belongs to the GcvP family. The glycine cleavage system is composed of four proteins: P, T, L and H. Requires pyridoxal 5'-phosphate as cofactor.

The enzyme catalyses N(6)-[(R)-lipoyl]-L-lysyl-[glycine-cleavage complex H protein] + glycine + H(+) = N(6)-[(R)-S(8)-aminomethyldihydrolipoyl]-L-lysyl-[glycine-cleavage complex H protein] + CO2. Functionally, the glycine cleavage system catalyzes the degradation of glycine. The P protein binds the alpha-amino group of glycine through its pyridoxal phosphate cofactor; CO(2) is released and the remaining methylamine moiety is then transferred to the lipoamide cofactor of the H protein. The polypeptide is Glycine dehydrogenase (decarboxylating) 1 (Colwellia psychrerythraea (strain 34H / ATCC BAA-681) (Vibrio psychroerythus)).